The following is a 190-amino-acid chain: Holliday junction branch migration complex subunit RuvA (190 aa).

The domain I stretch occupies residues 1–65; the sequence is MIGTLSGTVE…DGVSQLYGFA (65 aa). Residues 66–137 form a domain II region; sequence NREEQNCMRM…LTPQVQKFEL (72 aa). A flexible linker region spans residues 137–141; sequence LNRFA. The tract at residues 142–190 is domain III; that stretch reads ATTRTDSEAVAALLSLGYERTAALGALQKVGVCDSTEDAVRRALLELSK.

The protein belongs to the RuvA family. In terms of assembly, homotetramer. Forms an RuvA(8)-RuvB(12)-Holliday junction (HJ) complex. HJ DNA is sandwiched between 2 RuvA tetramers; dsDNA enters through RuvA and exits via RuvB. An RuvB hexamer assembles on each DNA strand where it exits the tetramer. Each RuvB hexamer is contacted by two RuvA subunits (via domain III) on 2 adjacent RuvB subunits; this complex drives branch migration. In the full resolvosome a probable DNA-RuvA(4)-RuvB(12)-RuvC(2) complex forms which resolves the HJ.

The protein resides in the cytoplasm. The RuvA-RuvB-RuvC complex processes Holliday junction (HJ) DNA during genetic recombination and DNA repair, while the RuvA-RuvB complex plays an important role in the rescue of blocked DNA replication forks via replication fork reversal (RFR). RuvA specifically binds to HJ cruciform DNA, conferring on it an open structure. The RuvB hexamer acts as an ATP-dependent pump, pulling dsDNA into and through the RuvAB complex. HJ branch migration allows RuvC to scan DNA until it finds its consensus sequence, where it cleaves and resolves the cruciform DNA. This Anaplasma marginale (strain Florida) protein is Holliday junction branch migration complex subunit RuvA.